A 134-amino-acid chain; its full sequence is Protein Turandot E (134 aa).

The first 38 residues, 1 to 38 (MSNTRTVHSSTSISKMNSALQISCLLVVLGCLLGSGHC), serve as a signal peptide directing secretion.

The protein belongs to the Turandot family.

It is found in the secreted. In terms of biological role, a humoral factor that may play a role in stress tolerance. The sequence is that of Protein Turandot E from Drosophila melanogaster (Fruit fly).